Reading from the N-terminus, the 315-residue chain is 4-hydroxy-3-methylbut-2-enyl diphosphate reductase (315 aa).

[4Fe-4S] cluster is bound at residue cysteine 12. Residues histidine 43 and histidine 81 each coordinate (2E)-4-hydroxy-3-methylbut-2-enyl diphosphate. The dimethylallyl diphosphate site is built by histidine 43 and histidine 81. Residues histidine 43 and histidine 81 each contribute to the isopentenyl diphosphate site. Cysteine 103 serves as a coordination point for [4Fe-4S] cluster. Position 131 (histidine 131) interacts with (2E)-4-hydroxy-3-methylbut-2-enyl diphosphate. Histidine 131 is a binding site for dimethylallyl diphosphate. Residue histidine 131 coordinates isopentenyl diphosphate. Glutamate 133 acts as the Proton donor in catalysis. Residue threonine 170 coordinates (2E)-4-hydroxy-3-methylbut-2-enyl diphosphate. Cysteine 198 contributes to the [4Fe-4S] cluster binding site. Serine 226, asparagine 228, and serine 271 together coordinate (2E)-4-hydroxy-3-methylbut-2-enyl diphosphate. Positions 226, 228, and 271 each coordinate dimethylallyl diphosphate. Residues serine 226, asparagine 228, and serine 271 each coordinate isopentenyl diphosphate.

It belongs to the IspH family. [4Fe-4S] cluster is required as a cofactor.

The catalysed reaction is isopentenyl diphosphate + 2 oxidized [2Fe-2S]-[ferredoxin] + H2O = (2E)-4-hydroxy-3-methylbut-2-enyl diphosphate + 2 reduced [2Fe-2S]-[ferredoxin] + 2 H(+). It carries out the reaction dimethylallyl diphosphate + 2 oxidized [2Fe-2S]-[ferredoxin] + H2O = (2E)-4-hydroxy-3-methylbut-2-enyl diphosphate + 2 reduced [2Fe-2S]-[ferredoxin] + 2 H(+). The protein operates within isoprenoid biosynthesis; dimethylallyl diphosphate biosynthesis; dimethylallyl diphosphate from (2E)-4-hydroxy-3-methylbutenyl diphosphate: step 1/1. It participates in isoprenoid biosynthesis; isopentenyl diphosphate biosynthesis via DXP pathway; isopentenyl diphosphate from 1-deoxy-D-xylulose 5-phosphate: step 6/6. In terms of biological role, catalyzes the conversion of 1-hydroxy-2-methyl-2-(E)-butenyl 4-diphosphate (HMBPP) into a mixture of isopentenyl diphosphate (IPP) and dimethylallyl diphosphate (DMAPP). Acts in the terminal step of the DOXP/MEP pathway for isoprenoid precursor biosynthesis. This Geobacillus sp. (strain WCH70) protein is 4-hydroxy-3-methylbut-2-enyl diphosphate reductase.